The sequence spans 746 residues: Long-chain-alcohol oxidase FAO3 (746 aa).

A helical membrane pass occupies residues 139–159 (ILTPIRAAFVYIKVAFLFCFF). Residue 233–248 (CDVVVVGSGSGGGVAA) participates in FAD binding. Histidine 677 acts as the Proton acceptor in catalysis.

This sequence belongs to the GMC oxidoreductase family.

The protein resides in the membrane. The catalysed reaction is a long-chain primary fatty alcohol + O2 = a long-chain fatty aldehyde + H2O2. Its function is as follows. Long-chain fatty alcohol oxidase involved in the omega-oxidation pathway of lipid degradation. The sequence is that of Long-chain-alcohol oxidase FAO3 (FAO3) from Arabidopsis thaliana (Mouse-ear cress).